The primary structure comprises 297 residues: Nucleotide-binding protein Bphy_0322 (297 aa).

8–15 (GISGSGKS) contributes to the ATP binding site. Residue 57–60 (DARS) coordinates GTP.

Belongs to the RapZ-like family.

Displays ATPase and GTPase activities. This chain is Nucleotide-binding protein Bphy_0322, found in Paraburkholderia phymatum (strain DSM 17167 / CIP 108236 / LMG 21445 / STM815) (Burkholderia phymatum).